Here is a 162-residue protein sequence, read N- to C-terminus: 2-C-methyl-D-erythritol 2,4-cyclodiphosphate synthase (162 aa).

Asp-9 and His-11 together coordinate a divalent metal cation. Residues 9 to 11 and 37 to 38 contribute to the 4-CDP-2-C-methyl-D-erythritol 2-phosphate site; these read DVH and HS. His-45 is an a divalent metal cation binding site.

The protein belongs to the IspF family. In terms of assembly, homotrimer. A divalent metal cation is required as a cofactor.

It catalyses the reaction 4-CDP-2-C-methyl-D-erythritol 2-phosphate = 2-C-methyl-D-erythritol 2,4-cyclic diphosphate + CMP. It functions in the pathway isoprenoid biosynthesis; isopentenyl diphosphate biosynthesis via DXP pathway; isopentenyl diphosphate from 1-deoxy-D-xylulose 5-phosphate: step 4/6. Involved in the biosynthesis of isopentenyl diphosphate (IPP) and dimethylallyl diphosphate (DMAPP), two major building blocks of isoprenoid compounds. Catalyzes the conversion of 4-diphosphocytidyl-2-C-methyl-D-erythritol 2-phosphate (CDP-ME2P) to 2-C-methyl-D-erythritol 2,4-cyclodiphosphate (ME-CPP) with a corresponding release of cytidine 5-monophosphate (CMP). The polypeptide is 2-C-methyl-D-erythritol 2,4-cyclodiphosphate synthase (Petrotoga mobilis (strain DSM 10674 / SJ95)).